The sequence spans 208 residues: Large ribosomal subunit protein uL4 (208 aa).

A disordered region spans residues 44–85 (RQGTKKTKTRAEVRGGGKKPWRQKGTGRARQGSIRAPHWRGG). Basic residues predominate over residues 59–70 (GGKKPWRQKGTG).

The protein belongs to the universal ribosomal protein uL4 family. In terms of assembly, part of the 50S ribosomal subunit.

In terms of biological role, one of the primary rRNA binding proteins, this protein initially binds near the 5'-end of the 23S rRNA. It is important during the early stages of 50S assembly. It makes multiple contacts with different domains of the 23S rRNA in the assembled 50S subunit and ribosome. Forms part of the polypeptide exit tunnel. The polypeptide is Large ribosomal subunit protein uL4 (Mesoplasma florum (strain ATCC 33453 / NBRC 100688 / NCTC 11704 / L1) (Acholeplasma florum)).